Consider the following 241-residue polypeptide: MTYKLKISYDGSFFRGYAKQKDENLITVQSELEKYLSLFFNTKISTFGSGRTDKYVHAIDQTVSFKCDSDYDPKSIQNFLNSKLTNIYVNSIEKVPNSFHARFSIKSKTYMYVINTGEFDVFKQRYEYQYNKSIDIKKCEDIINLFIGTKDFLSFSTSKLENTTRTIRWIRIIKKNKKIYIFINGEGFLRNMVRMIVGIILTYCENKITYQEVLDLFKNPKKGSAVIKVPGCGLYLYRTIY.

The active-site Nucleophile is aspartate 53. Tyrosine 110 contacts substrate.

The protein belongs to the tRNA pseudouridine synthase TruA family. As to quaternary structure, homodimer.

The enzyme catalyses uridine(38/39/40) in tRNA = pseudouridine(38/39/40) in tRNA. In terms of biological role, formation of pseudouridine at positions 38, 39 and 40 in the anticodon stem and loop of transfer RNAs. This chain is tRNA pseudouridine synthase A, found in Malacoplasma penetrans (strain HF-2) (Mycoplasma penetrans).